Consider the following 345-residue polypeptide: UDP-3-O-acylglucosamine N-acyltransferase (345 aa).

Histidine 241 serves as the catalytic Proton acceptor.

It belongs to the transferase hexapeptide repeat family. LpxD subfamily. In terms of assembly, homotrimer.

It catalyses the reaction a UDP-3-O-[(3R)-3-hydroxyacyl]-alpha-D-glucosamine + a (3R)-hydroxyacyl-[ACP] = a UDP-2-N,3-O-bis[(3R)-3-hydroxyacyl]-alpha-D-glucosamine + holo-[ACP] + H(+). It functions in the pathway bacterial outer membrane biogenesis; LPS lipid A biosynthesis. Functionally, catalyzes the N-acylation of UDP-3-O-acylglucosamine using 3-hydroxyacyl-ACP as the acyl donor. Is involved in the biosynthesis of lipid A, a phosphorylated glycolipid that anchors the lipopolysaccharide to the outer membrane of the cell. This Desulfotalea psychrophila (strain LSv54 / DSM 12343) protein is UDP-3-O-acylglucosamine N-acyltransferase.